The primary structure comprises 224 residues: 7-cyano-7-deazaguanine synthase (224 aa).

12–22 (LSGGLDSSTVT) serves as a coordination point for ATP. Zn(2+) is bound by residues Cys-193, Cys-201, Cys-204, and Cys-207.

This sequence belongs to the QueC family. It depends on Zn(2+) as a cofactor.

The catalysed reaction is 7-carboxy-7-deazaguanine + NH4(+) + ATP = 7-cyano-7-deazaguanine + ADP + phosphate + H2O + H(+). The protein operates within purine metabolism; 7-cyano-7-deazaguanine biosynthesis. Catalyzes the ATP-dependent conversion of 7-carboxy-7-deazaguanine (CDG) to 7-cyano-7-deazaguanine (preQ(0)). The sequence is that of 7-cyano-7-deazaguanine synthase from Prochlorococcus marinus (strain MIT 9301).